We begin with the raw amino-acid sequence, 403 residues long: Synaptotagmin-7 (403 aa).

Residues 1–16 (MYRDPEAASPGAPTRD) are Vesicular-facing. Residues 17–37 (VLLVSAIITVSLSVTIVLCGL) traverse the membrane as a helical segment. Over 38–403 (CHWCQRKLGK…PVAQWHQLKA (366 aa)) the chain is Cytoplasmic. Ser-52 is subject to Phosphoserine. Residues 53-103 (LETVGTPDSGRGRGEKKAIKLPAGGKAVNTAPVPGQTPHDESDRRTETRSS) are disordered. Phosphothreonine is present on Thr-58. Ser-61 is modified (phosphoserine). Basic and acidic residues predominate over residues 90 to 100 (PHDESDRRTET). A phosphoserine mark is found at Ser-119 and Ser-122. C2 domains follow at residues 135-255 (NLGR…TFWK) and 266-399 (SRGE…AQWH). Asp-166 contributes to the Ca(2+) binding site. 2 positions are modified to asymmetric dimethylarginine: Gly-169 and Ser-171. Residues Asp-172, Asp-225, Asp-227, Ser-230, Asp-233, Asp-297, Asp-303, Asp-357, Asp-359, Ser-362, and Asp-365 each coordinate Ca(2+).

Belongs to the synaptotagmin family. Homodimer. Can also form heterodimers with SYT6, SYT9 and SYT10. Interacts with calmodulin (CALM1, CALM2 or CALM3). Interacts with CD63; required for localization to lysosomes. Interacts with APP. Ca(2+) serves as cofactor. In terms of processing, palmitoylated at its vesicular N-terminus; palmitoylation is required for localization to lysosome and phagocytosis in macrophages. As to expression, widely expressed. Expressed in insulin-secreting cells. Present in glucagon-secreting cells (at protein level).

The protein localises to the cell membrane. Its subcellular location is the presynaptic cell membrane. The protein resides in the cytoplasmic vesicle. It localises to the secretory vesicle. It is found in the synaptic vesicle membrane. The protein localises to the lysosome membrane. Its subcellular location is the phagosome membrane. The protein resides in the peroxisome membrane. It localises to the secretory vesicle membrane. Functionally, ca(2+) sensor involved in Ca(2+)-dependent exocytosis of secretory and synaptic vesicles through Ca(2+) and phospholipid binding to the C2 domain. Ca(2+) induces binding of the C2-domains to phospholipid membranes and to assembled SNARE-complexes; both actions contribute to triggering exocytosis. SYT7 binds Ca(2+) with high affinity and slow kinetics compared to other synaptotagmins. Involved in Ca(2+)-triggered lysosomal exocytosis, a major component of the plasma membrane repair. Ca(2+)-regulated delivery of lysosomal membranes to the cell surface is also involved in the phagocytic uptake of particles by macrophages. Ca(2+)-triggered lysosomal exocytosis also plays a role in bone remodeling by regulating secretory pathways in osteoclasts and osteoblasts. Involved in cholesterol transport from lysosome to peroxisome by promoting membrane contacts between lysosomes and peroxisomes: probably acts by promoting vesicle fusion by binding phosphatidylinositol-4,5-bisphosphate on peroxisomal membranes. Acts as a key mediator of synaptic facilitation, a process also named short-term synaptic potentiation: synaptic facilitation takes place at synapses with a low initial release probability and is caused by influx of Ca(2+) into the axon terminal after spike generation, increasing the release probability of neurotransmitters. Probably mediates synaptic facilitation by directly increasing the probability of release. May also contribute to synaptic facilitation by regulating synaptic vesicle replenishment, a process required to ensure that synaptic vesicles are ready for the arrival of the next action potential: SYT7 is required for synaptic vesicle replenishment by acting as a sensor for Ca(2+) and by forming a complex with calmodulin. Also acts as a regulator of Ca(2+)-dependent insulin and glucagon secretion in beta-cells. Triggers exocytosis by promoting fusion pore opening and fusion pore expansion in chromaffin cells. Also regulates the secretion of some non-synaptic secretory granules of specialized cells. The chain is Synaptotagmin-7 from Mus musculus (Mouse).